The primary structure comprises 378 residues: Polar flagellin B/D (378 aa).

2 coiled-coil regions span residues 103-128 and 311-340; these read SNSK…RIAE and AFQN…IKDT.

The protein belongs to the bacterial flagellin family. Heteromer of multiple flagellin subunits including FlaA, FlaB/D, FlaC, FlaE and FlaF.

It localises to the secreted. Its subcellular location is the bacterial flagellum. In terms of biological role, flagellin is the subunit protein which polymerizes to form the filaments of bacterial flagella. FlaB/D is not essential for polar flagellar synthesis and swimming motility. Homomer of FlaB/D is not able to form a functional filament. This chain is Polar flagellin B/D (flaB), found in Vibrio parahaemolyticus serotype O3:K6 (strain RIMD 2210633).